We begin with the raw amino-acid sequence, 721 residues long: Quinolinate synthase, chloroplastic (721 aa).

Residues 1 to 67 (MDAANLVMKS…KIPSNNSTFT (67 aa)) constitute a chloroplast transit peptide. Residue cysteine 133 is the Cysteine persulfide intermediate of the active site. 2 residues coordinate iminosuccinate: histidine 283 and serine 309. [4Fe-4S] cluster is bound at residue cysteine 363. Iminosuccinate is bound by residues 392–394 (YIN) and serine 414. Cysteine 487 is a [4Fe-4S] cluster binding site. Residues 513–515 (HFE) and threonine 538 each bind iminosuccinate. Cysteine 643 is a binding site for [4Fe-4S] cluster.

Belongs to the quinolinate synthase family. Type 1 subfamily. In terms of assembly, homodimer. Requires [4Fe-4S] cluster as cofactor.

It is found in the plastid. The protein resides in the chloroplast. It carries out the reaction iminosuccinate + dihydroxyacetone phosphate = quinolinate + phosphate + 2 H2O + H(+). It participates in alkaloid biosynthesis; nicotine biosynthesis. The protein operates within cofactor biosynthesis; NAD(+) biosynthesis; quinolinate from iminoaspartate: step 1/1. Involved in the biosynthesis of pyridine alkaloid natural products, leading mainly to the production of anabasine, anatabine, nicotine and nornicotine, effective deterrents against herbivores with antiparasitic and pesticide properties (neurotoxins); nornicotine serves as the precursor in the synthesis of the carcinogen compound N'-nitrosonornicotine (NNN). Catalyzes the condensation of iminoaspartate with dihydroxyacetone phosphate to form quinolinate. This is Quinolinate synthase, chloroplastic from Nicotiana tabacum (Common tobacco).